Here is a 514-residue protein sequence, read N- to C-terminus: Steroid 17-alpha-hydroxylase/17,20 lyase (514 aa).

Residue Cys445 participates in heme binding.

The protein belongs to the cytochrome P450 family. Heme is required as a cofactor.

It localises to the membrane. It carries out the reaction a C21-steroid + reduced [NADPH--hemoprotein reductase] + O2 = a 17alpha-hydroxy-C21-steroid + oxidized [NADPH--hemoprotein reductase] + H2O + H(+). The enzyme catalyses 17alpha-hydroxyprogesterone + reduced [NADPH--hemoprotein reductase] + O2 = androst-4-ene-3,17-dione + acetate + oxidized [NADPH--hemoprotein reductase] + H2O + 2 H(+). The catalysed reaction is 17alpha-hydroxypregnenolone + reduced [NADPH--hemoprotein reductase] + O2 = 3beta-hydroxyandrost-5-en-17-one + acetate + oxidized [NADPH--hemoprotein reductase] + H2O + 2 H(+). Its pathway is lipid metabolism; steroid biosynthesis. Functionally, conversion of pregnenolone and progesterone to their 17-alpha-hydroxylated products and subsequently to dehydroepiandrosterone (DHEA) and androstenedione. Catalyzes both the 17-alpha-hydroxylation and the 17,20-lyase reaction. This is Steroid 17-alpha-hydroxylase/17,20 lyase (cyp17a1) from Ictalurus punctatus (Channel catfish).